Consider the following 146-residue polypeptide: DNA-directed RNA polymerases II, IV and V subunit 8B (146 aa).

It belongs to the eukaryotic RPB8 RNA polymerase subunit family. In terms of assembly, component of the RNA polymerase II, IV and V complexes. Associates with the mediator complex.

The protein localises to the nucleus. DNA-dependent RNA polymerase catalyzes the transcription of DNA into RNA using the four ribonucleoside triphosphates as substrates. Component of RNA polymerase II which synthesizes mRNA precursors and many functional non-coding RNAs. Pol II is the central component of the basal RNA polymerase II transcription machinery. It is composed of mobile elements that move relative to each other. Component of RNA polymerases IV and V which mediate short-interfering RNAs (siRNA) accumulation and subsequent RNA-directed DNA methylation-dependent (RdDM) transcriptional gene silencing (TGS) of endogenous repeated sequences, including transposable elements. The sequence is that of DNA-directed RNA polymerases II, IV and V subunit 8B (NRPB8B) from Arabidopsis thaliana (Mouse-ear cress).